The chain runs to 761 residues: Semaphorin-3D (761 aa).

The first 24 residues, 1 to 24 (MRASQVPNACSLLSLAMLFFPVTG), serve as a signal peptide directing secretion. One can recognise a Sema domain in the interval 32–519 (RLKLSYKDLL…SRDGLVQLSL (488 aa)). A disulfide bond links Cys-105 and Cys-116. Residue Asn-127 is glycosylated (N-linked (GlcNAc...) asparagine). 4 cysteine pairs are disulfide-bonded: Cys-134–Cys-143, Cys-274–Cys-386, Cys-298–Cys-346, and Cys-522–Cys-540. An Ig-like C2-type domain is found at 552-670 (PTSKRRARRQ…IHTIVKLNLN (119 aa)). An N-linked (GlcNAc...) asparagine glycan is attached at Asn-595. Cysteines 653 and 719 form a disulfide. Basic residues predominate over residues 728-754 (RRQRNKGGAKWKHVQEMKKKRNRRHHE). The segment at 728–761 (RRQRNKGGAKWKHVQEMKKKRNRRHHEPARPPST) is disordered.

This sequence belongs to the semaphorin family. As to expression, developing spinal cord and developing visual system. Collapsin-1, -2, -3, and -5 bind to overlapping but distinct axon tracts.

The protein localises to the secreted. Induces the collapse and paralysis of neuronal growth cones. Could potentially act as repulsive cues toward specific neuronal populations. Binds to neuropilin. This chain is Semaphorin-3D (SEMA3D), found in Gallus gallus (Chicken).